Consider the following 647-residue polypeptide: Threonine--tRNA ligase (647 aa).

Positions M1 to T61 constitute a TGS domain. Residues D242 to P540 are catalytic. C336, H387, and H517 together coordinate Zn(2+).

Belongs to the class-II aminoacyl-tRNA synthetase family. As to quaternary structure, homodimer. Requires Zn(2+) as cofactor.

It localises to the cytoplasm. It catalyses the reaction tRNA(Thr) + L-threonine + ATP = L-threonyl-tRNA(Thr) + AMP + diphosphate + H(+). Catalyzes the attachment of threonine to tRNA(Thr) in a two-step reaction: L-threonine is first activated by ATP to form Thr-AMP and then transferred to the acceptor end of tRNA(Thr). Also edits incorrectly charged L-seryl-tRNA(Thr). The chain is Threonine--tRNA ligase from Streptococcus pneumoniae (strain P1031).